We begin with the raw amino-acid sequence, 32 residues long: MSDIN-like toxin proprotein 11 (32 aa).

A propeptide spanning residues M1–P10 is cleaved from the precursor. The segment at M1–G32 is disordered. A cross-link (cyclopeptide (Gly-Pro)) is located at residues G11–P19. Residues C20–G32 constitute a propeptide that is removed on maturation.

This sequence belongs to the MSDIN fungal toxin family. Processed by the macrocyclase-peptidase enzyme POPB to yield a toxic cyclic nonapeptide. POPB first removes 10 residues from the N-terminus. Conformational trapping of the remaining peptide forces the enzyme to release this intermediate rather than proceed to macrocyclization. The enzyme rebinds the remaining peptide in a different conformation and catalyzes macrocyclization of the N-terminal 9 residues.

Its function is as follows. Probable toxin that belongs to the MSDIN-like toxin family responsible for a large number of food poisoning cases and deaths. This Amanita bisporigera (Destroying angel) protein is MSDIN-like toxin proprotein 11.